A 178-amino-acid chain; its full sequence is Probable DNA-directed RNA polymerase subunit delta (178 aa).

The 68-residue stretch at 14–81 folds into the HTH HARE-type domain; that stretch reads LSLIDVAHFI…GNNTWGLRAW (68 aa). Disordered stretches follow at residues 89–122 and 141–178; these read EEVQ…DYDD and LDED…PEDK. 3 stretches are compositionally biased toward acidic residues: residues 105 to 122, 141 to 150, and 161 to 178; these read DDDD…DYDD, LDEDEDDDDH, and TVED…PEDK.

Belongs to the RpoE family. As to quaternary structure, RNAP is composed of a core of 2 alpha, a beta and a beta' subunits. The core is associated with a delta subunit and one of several sigma factors.

In terms of biological role, participates in both the initiation and recycling phases of transcription. In the presence of the delta subunit, RNAP displays an increased specificity of transcription, a decreased affinity for nucleic acids, and an increased efficiency of RNA synthesis because of enhanced recycling. The sequence is that of Probable DNA-directed RNA polymerase subunit delta from Listeria innocua serovar 6a (strain ATCC BAA-680 / CLIP 11262).